A 555-amino-acid polypeptide reads, in one-letter code: Solute carrier family 22 member 2 (555 aa).

At 1-21 the chain is on the cytoplasmic side; that stretch reads MSTVDDILEHIGEFHLFQKQT. Residues 22 to 42 traverse the membrane as a helical segment; that stretch reads FFLLALLSGAFTPIYVGIVFL. Over 43 to 150 the chain is Extracellular; that stretch reads GFTPDHHCWS…LVCAHSWMLD (108 aa). N-linked (GlcNAc...) asparagine glycosylation occurs at asparagine 71. The helical transmembrane segment at 151–171 threads the bilayer; it reads LFQSVVNVGFFIGAMMIGYLA. Over 172–177 the chain is Cytoplasmic; it reads DRFGRK. A helical transmembrane segment spans residues 178–198; it reads FCLLVTILINAISGALMAISP. At 199–210 the chain is on the extracellular side; sequence NYAWMLVFRFLQ. Residues 211-231 traverse the membrane as a helical segment; the sequence is GLVSKAGWLIGYILITEFVGL. The Cytoplasmic portion of the chain corresponds to 232-238; it reads GYRRMVG. A helical membrane pass occupies residues 239–259; sequence ICYQIAFTVGLLILAGVAYVI. Residues 260–263 are Extracellular-facing; it reads PNWR. Residues 264–284 form a helical membrane-spanning segment; it reads WLQFAVTLPNFCFLLYFWCIP. Residues 284 to 288 carry the Proline-rich sequence motif; that stretch reads PESPR. Residues 285 to 348 lie on the Cytoplasmic side of the membrane; the sequence is ESPRWLISQN…VRTPQIRKHT (64 aa). Residues 349 to 369 traverse the membrane as a helical segment; the sequence is LILMYNWFTSSVLYQGLIMHM. The Extracellular portion of the chain corresponds to 370-375; it reads GLAGDN. The chain crosses the membrane as a helical span at residues 376 to 396; it reads IYLDFFYSALVEFPAAFIIIL. At 397–404 the chain is on the cytoplasmic side; it reads TIDRVGRR. The helical transmembrane segment at 405 to 425 threads the bilayer; sequence YPWAVSNMVAGAACLASVFIP. At 426-432 the chain is on the extracellular side; the sequence is DDLQWLK. The helical transmembrane segment at 433–453 threads the bilayer; it reads ITIACLGRMGITMAYEMVCLV. Over 454-464 the chain is Cytoplasmic; sequence NAELYPTYIRN. Residues 465–485 traverse the membrane as a helical segment; the sequence is LGVLVCSSMCDIGGIITPFLV. Residues 486-494 lie on the Extracellular side of the membrane; the sequence is YRLTDIWME. Residues 495–515 traverse the membrane as a helical segment; the sequence is FPLVVFAVVGLVAGALVLLLP. At 516–555 the chain is on the cytoplasmic side; that stretch reads ETKGKALPETIEDAENMQRPRKKKEKRIYLQVKQADRPLS.

It belongs to the major facilitator (TC 2.A.1) superfamily. Organic cation transporter (TC 2.A.1.19) family. In terms of processing, tyrosine phosphorylated. As to expression, expressed in the kidney, in the proximal tubules of cortex and of the outer medulla. In brain, highly expressed predominantly in regions located at the brain-cerebrospinal fluid border, in the leptomeninges, in the choroid plexus and in a layer boarding the third ventricle. In brain, also observed in the granular cell layer of the cerebellum and in the granular layer and pyramidal cells of the hippocampus in the CA1-CA3 regions. Expressed in tracheal and bronchial ciliated epithelium in the respiratory tract. Expression is greater in the kidney of male than of female.

It is found in the basolateral cell membrane. It localises to the basal cell membrane. Its subcellular location is the apical cell membrane. The catalysed reaction is (R)-noradrenaline(out) = (R)-noradrenaline(in). The enzyme catalyses (R)-adrenaline(out) = (R)-adrenaline(in). It catalyses the reaction serotonin(out) = serotonin(in). It carries out the reaction dopamine(out) = dopamine(in). The catalysed reaction is histamine(out) = histamine(in). The enzyme catalyses thiamine(in) = thiamine(out). It catalyses the reaction creatinine(in) = creatinine(out). It carries out the reaction 1-methylnicotinamide(out) = 1-methylnicotinamide(in). The catalysed reaction is guanidine(out) = guanidine(in). The enzyme catalyses choline(out) = choline(in). It catalyses the reaction agmatine(out) = agmatine(in). It carries out the reaction putrescine(out) = putrescine(in). The catalysed reaction is spermidine(in) = spermidine(out). The enzyme catalyses tyramine(in) = tyramine(out). It catalyses the reaction L-histidyl-L-proline diketopiperazine(in) = L-histidyl-L-proline diketopiperazine(out). It carries out the reaction (R)-salsolinol(in) = (R)-salsolinol(out). The catalysed reaction is N-methyl-(R)-salsolinol(in) = N-methyl-(R)-salsolinol(out). The enzyme catalyses acetylcholine(in) = acetylcholine(out). It catalyses the reaction prostaglandin F2alpha(out) = prostaglandin F2alpha(in). It carries out the reaction prostaglandin E2(out) = prostaglandin E2(in). With respect to regulation, tyrosine phosphorylation of the transporter leads to activation of the transport activity. Inhibited by cGMP, most likely through a cGMP-binding protein that interacts with OCT2. In terms of biological role, electrogenic voltage-dependent transporter that mediates the transport of a variety of organic cations such as endogenous bioactive amines, cationic drugs and xenobiotics. Functions as a Na(+)-independent, bidirectional uniporter. Cation cellular uptake or release is driven by the electrochemical potential, i.e. membrane potential and concentration gradient. However, may also engage electroneutral cation exchange when saturating concentrations of cation substrates are reached. Predominantly expressed at the basolateral membrane of hepatocytes and proximal tubules and involved in the uptake and disposition of cationic compounds by hepatic and renal clearance from the blood flow. Implicated in monoamine neurotransmitters uptake such as histamine, dopamine, adrenaline/epinephrine, noradrenaline/norepinephrine, serotonin and tyramine, thereby supporting a physiological role in the central nervous system by regulating interstitial concentrations of neurotransmitters. Also capable of transporting dopaminergic neuromodulators cyclo(his-pro), salsolinol and N-methyl-salsolinol, thereby involved in the maintenance of dopaminergic cell integrity in the central nervous system. Mediates the bidirectional transport of acetylcholine (ACh) at the apical membrane of ciliated cell in airway epithelium, thereby playing a role in luminal release of ACh from bronchial epithelium. Also transports guanidine and endogenous monoamines such as vitamin B1/thiamine, creatinine and N-1-methylnicotinamide (NMN). Mediates the uptake and efflux of quaternary ammonium compound choline. Mediates the bidirectional transport of polyamine agmatine and the uptake of polyamine putrescine. Able to transport non-amine endogenous compounds such as prostaglandin E2 (PGE2) and prostaglandin F2-alpha (PGF2-alpha). Also involved in the uptake of xenobiotic 4-(4-(dimethylamino)styryl)-N-methylpyridinium (ASP). May contribute to regulate the transport of organic compounds in testis across the blood-testis-barrier. The chain is Solute carrier family 22 member 2 from Rattus norvegicus (Rat).